Here is a 181-residue protein sequence, read N- to C-terminus: LEM domain-containing protein 1 (181 aa).

The region spanning 1 to 45 (MVDVKCLSDCKLQNQLEKLGFSPGPILPSTRKLYEKKLVQLLVSP) is the LEM domain. The helical; Signal-anchor for type II membrane protein transmembrane segment at 152–172 (FPVGLKLAVLGIFIIVVFVYL) threads the bilayer.

Testis-specific. Isoform 6 is detected in 17 of 18 colon cancer tissues examined.

The protein resides in the membrane. The protein is LEM domain-containing protein 1 (LEMD1) of Homo sapiens (Human).